The primary structure comprises 642 residues: Terminase, large subunit (642 aa).

The interval 1 to 48 (MISDAQKAANAAGAIATGLLSLIIPVPLTTVQWANKHYYLPKESSYTP) is interaction with the terminase small subunit. Positions 42 to 51 (KESSYTPGRW) match the Q motif motif. Positions 76–83 (KSARVGYT) match the Walker A motif motif. A DNA packaging/ATPase region spans residues 166–353 (NYREKSVDVV…LDALKDPNGL (188 aa)). Positions 174 to 179 (VVCYDE) match the Walker B motif motif. Glutamate 179 serves as the catalytic For ATPase activity. Aspartate 401 contributes to the Mg(2+) binding site. Residues 401 to 587 (DSQRNRFEMY…LWDNKKRRNE (187 aa)) are endonuclease. Residue 491 to 498 (GASVYGKP) coordinates ATP. Residues 574-585 (KMRLLWDNKKRR) are basic. The segment at 589 to 617 (LDCLVYAYAALRVSVQRWQLDLAVLAKSR) is leucine zipper. A prohead binding region spans residues 611 to 642 (AVLAKSREEETTRPTLKELAAKLSGGVNGYSR).

It belongs to the lambdavirus large terminase family. In terms of assembly, heterotrimer of two small and one large terminase subunits. The catalytically competent terminase is composed of a tetramer of heterotrimers. The tetramer forms a ring structure large enough to encircle duplex DNA. Host IHFA/IHFB induces bending of viral DNA to facilitate the assembly of the terminase tetramer of heterotrimers. Interacts (via N-terminus) with the terminase small subunit (via C-terminus). Interacts (via C-terminus) with the portal protein; this interaction allows the packaging of viral DNA. Requires Mg(2+) as cofactor.

The protein localises to the host cytoplasm. The catalysed reaction is Endonucleolytic cleavage of DNA to give specific double-stranded fragments with terminal 5'-phosphates.. In terms of biological role, the terminase large subunit acts as an ATP driven molecular motor necessary for viral DNA translocation into empty capsids and as an endonuclease that cuts the viral genome from the concetamer to initiate and to end the packaging reaction. The terminase lies at a unique vertex of the procapsid and is composed of two subunits, a small terminase subunit involved in viral DNA recognition (binding to packaging sequence cos), and a large terminase subunit possessing endonucleolytic and ATPase activities (DNA maturation and packaging). The terminase binds cooperatively with the host factor IHFA/IHFB to the cos site at the junction of adjacent viral genomes. The endonuclease activity cleaves the viral DNA generating 5'overhangs of 12 bp in length. The strand separation activity separates the cohesive ends generating the single-stranded 'sticky' ends of the mature genome. IHFA/IHFB is also necessary for the strand separation activity of the terminase. The terminase remains bound to the left end of the genome to be packaged, forming a stable DNA-terminase complex. In a reaction facilitated by the viral assembly catalyst gpFI, the DNA-terminase complex binds to the portal of the procapsid thereby activating the translocase activity of the terminase. The terminase packages the viral DNA into the procapsid until the next cos site on the concatemer reaches the complex. The downstream cos site is then cut generating the mature right end of the genome, the heterotrimer undocks from the DNA-filled head and remains bound to the left end of concatemer's next genome. This chain is Terminase, large subunit (2), found in Escherichia coli (Bacteriophage 21).